The chain runs to 195 residues: uncharacterized protein (195 aa).

The chain crosses the membrane as a helical span at residues 175-195 (ILGKISGFFGSIVSTIFSLFG).

The protein resides in the membrane. This is an uncharacterized protein from Methanocaldococcus jannaschii (strain ATCC 43067 / DSM 2661 / JAL-1 / JCM 10045 / NBRC 100440) (Methanococcus jannaschii).